The sequence spans 208 residues: Somatotropin-B (208 aa).

Positions 1–25 (MVPGSCSSFGLLVILSFQNVPDVGG) are cleaved as a signal peptide. Histidine 44 serves as a coordination point for Zn(2+). The cysteines at positions 77 and 181 are disulfide-linked. Glutamate 190 lines the Zn(2+) pocket. The cysteines at positions 198 and 206 are disulfide-linked.

It belongs to the somatotropin/prolactin family.

The protein resides in the secreted. In terms of biological role, growth hormone plays an important role in growth control. In Xenopus laevis (African clawed frog), this protein is Somatotropin-B (gh-b).